Consider the following 377-residue polypeptide: Putrescine transport ATP-binding protein PotG (377 aa).

One can recognise an ABC transporter domain in the interval 20 to 250 (LEIRNLTKSY…PTTRYSAEFI (231 aa)). Residue 52–59 (GASGCGKS) participates in ATP binding.

The protein belongs to the ABC transporter superfamily. The complex is composed of two ATP-binding proteins (PotG), two transmembrane proteins (PotH and PotI) and a solute-binding protein (PotF).

The protein localises to the cell inner membrane. The enzyme catalyses putrescine(out) + ATP + H2O = putrescine(in) + ADP + phosphate + H(+). With respect to regulation, transport is feedback inhibited by intracellular polyamines. Part of the ABC transporter complex PotFGHI involved in putrescine uptake. Responsible for energy coupling to the transport system. Imports putrescine for maintenance of the optimal concentration of polyamines necessary for cell growth in the presence of glucose. The polypeptide is Putrescine transport ATP-binding protein PotG (Escherichia coli (strain K12)).